Consider the following 304-residue polypeptide: Acetylglutamate kinase (304 aa).

Residues 82-83 (GG), arginine 104, and asparagine 197 contribute to the substrate site.

The protein belongs to the acetylglutamate kinase family. ArgB subfamily.

It localises to the cytoplasm. The enzyme catalyses N-acetyl-L-glutamate + ATP = N-acetyl-L-glutamyl 5-phosphate + ADP. Its pathway is amino-acid biosynthesis; L-arginine biosynthesis; N(2)-acetyl-L-ornithine from L-glutamate: step 2/4. Functionally, catalyzes the ATP-dependent phosphorylation of N-acetyl-L-glutamate. This chain is Acetylglutamate kinase, found in Prochlorococcus marinus (strain SARG / CCMP1375 / SS120).